We begin with the raw amino-acid sequence, 164 residues long: uncharacterized protein (164 aa).

A signal peptide spans 1–18 (MILILTIIVGFLIYFVTA). Asparagine 88 carries N-linked (GlcNAc...) asparagine; by host glycosylation.

It belongs to the IIV-6 357R family.

This is an uncharacterized protein from Acheta domesticus (House cricket).